The primary structure comprises 275 residues: Transmembrane protein 106B (275 aa).

The interval 1–24 (MGKSLSHLPLHSNKEDGYDGVTST) is disordered. Gly-2 carries N-myristoyl glycine lipidation. The Cytoplasmic portion of the chain corresponds to 2-97 (GKSLSHLPLH…QRLRPRRTKL (96 aa)). Residue Ser-34 is modified to Phosphoserine. The helical transmembrane segment at 98–118 (YVMASVFVCLLLSGLAVFFLF) threads the bilayer. The Lumenal portion of the chain corresponds to 119–275 (PRSIDVKYIG…EYLNVLQPQQ (157 aa)). Residues Asn-146, Asn-152, Asn-165, and Asn-184 are each glycosylated (N-linked (GlcNAc...) asparagine). A disulfide bridge connects residues Cys-215 and Cys-254. Asn-257 is a glycosylation site (N-linked (GlcNAc...) asparagine).

It belongs to the TMEM106 family. Can form homomers. Interacts (via N-terminus) with MAP6 (via C-terminus). Interacts (via C-terminus) with the vacuolar-type ATPase subunit ATP6AP1. Interacts (via N-terminus) with AP2M1 and CLTC. Interacts with TMEM106C. In terms of tissue distribution, expressed in cortical neurons (at protein level).

The protein localises to the late endosome membrane. It localises to the lysosome membrane. The protein resides in the cell membrane. Functionally, involved in dendrite morphogenesis and maintenance by regulating lysosomal trafficking. May act as a molecular brake for retrograde transport of late endosomes/lysosomes, possibly via its interaction with MAP6. In neurons, may also play a role in the regulation of lysosomal size and responsiveness to stress. Required for proper lysosomal acidification. Its function is as follows. In neurons, involved in the transport of late endosomes/lysosomes. May be involved in dendrite morphogenesis and maintenance by regulating lysosomal trafficking. May act as a molecular brake for retrograde transport of late endosomes/lysosomes, possibly via its interaction with MAP6. In motoneurons, may mediate the axonal transport of lysosomes and axonal sorting at the initial segment. It remains unclear whether TMEM106B affects the transport of moving lysosomes in the anterograde or retrograde direction in neurites and whether it is particularly important in the sorting of lysosomes in axons or in dendrites. In neurons, may also play a role in the regulation of lysosomal size and responsiveness to stress. Required for proper lysosomal acidification. The sequence is that of Transmembrane protein 106B (Tmem106b) from Rattus norvegicus (Rat).